We begin with the raw amino-acid sequence, 166 residues long: Eukaryotic translation initiation factor 5A (166 aa).

A disordered region spans residues 1 to 21 (MSDEDHDFSHQGGGDNASKTY). Lys-53 is subject to Hypusine. Residues 101-121 (EDPSLPSHLSLMDDEGESRED) are disordered. Over residues 112-121 (MDDEGESRED) the composition is skewed to acidic residues.

It belongs to the eIF-5A family. In terms of processing, lys-53 undergoes hypusination, a unique post-translational modification that consists in the addition of a butylamino group from spermidine to lysine side chain, leading to the formation of the unusual amino acid hypusine. eIF-5As are the only known proteins to undergo this modification, which is essential for their function.

The protein resides in the cytoplasm. In terms of biological role, translation factor that promotes translation elongation and termination, particularly upon ribosome stalling at specific amino acid sequence contexts. Binds between the exit (E) and peptidyl (P) site of the ribosome and promotes rescue of stalled ribosome: specifically required for efficient translation of polyproline-containing peptides as well as other motifs that stall the ribosome. Acts as a ribosome quality control (RQC) cofactor by joining the RQC complex to facilitate peptidyl transfer during CAT tailing step. This chain is Eukaryotic translation initiation factor 5A, found in Leishmania donovani.